A 71-amino-acid chain; its full sequence is uncharacterized protein (71 aa).

The protein belongs to the varicellovirus ORF57 protein family.

This is an uncharacterized protein from Homo sapiens (Human).